The primary structure comprises 864 residues: Leucine--tRNA ligase (864 aa).

Residues 42 to 52 carry the 'HIGH' region motif; the sequence is PYPSGKLHMGH. A 'KMSKS' region motif is present at residues 624–628; it reads KMSKS. Lys627 serves as a coordination point for ATP.

The protein belongs to the class-I aminoacyl-tRNA synthetase family.

It is found in the cytoplasm. It carries out the reaction tRNA(Leu) + L-leucine + ATP = L-leucyl-tRNA(Leu) + AMP + diphosphate. The sequence is that of Leucine--tRNA ligase from Burkholderia pseudomallei (strain 668).